Reading from the N-terminus, the 475-residue chain is FAD-dependent monooxygenase sdgC (475 aa).

Positions 1 to 23 are cleaved as a signal peptide; it reads MDKRSFKVIVVGGSIAGLTLAHS. Residues glutamate 35, glycine 49, and arginine 126 each contribute to the FAD site. The N-linked (GlcNAc...) asparagine glycan is linked to asparagine 236. FAD is bound at residue alanine 330. A helical transmembrane segment spans residues 446 to 466; sequence ISGVLLLVIPIIALVYGYSVI.

It belongs to the paxM FAD-dependent monooxygenase family. It depends on FAD as a cofactor.

It is found in the membrane. It functions in the pathway secondary metabolite biosynthesis. In terms of biological role, FAD-dependent monooxygenase; part of the gene cluster that mediates the biosynthesis of the polyenes aspernidgulenes. The carbon backbone of aspernidgulenes is synthesized by the HR-PKS sdgA, which accepts acetyl-CoA as the starter unit and performs malonyl-CoA extensions as well as regioselective methylation and reduction. The resulting nonaketide offloads the HR-PKS by intramolecular lactonization to yield the 5,6-dihydro-alpha-pyrone-containing hexaenoic acids preaspernidgulene A1 and A2. The FAD-dependent monooxygenase sdgC then installs the first epoxide on the penultimate double bond. Subsequently, the FAD-dependent monooxygenase sdgF presumably generates a ketone intermediate through Meinwald rearrangement involving a hydride shift. Next, sdgC introduces another epoxide on the last olefin of the ketone intermediate after E/Z isomerization. The epoxide hydrolase sdgD then catalyzes stereospecific cyclization of the 5,6-dihydro-alpha-pyrone and opening of the epoxide ring to form an oxygenated trimethylcyclopentanone and an oxabicyclo[2.2.1]heptane unit. Finally, the bicyclic unit undergoes hydrolytic cleavage, either spontaneously or catalyzed by sdgD, to assemble the dimethyl-gamma-lactone moiety in aspernidgulene A1. The polypeptide is FAD-dependent monooxygenase sdgC (Emericella nidulans (strain FGSC A4 / ATCC 38163 / CBS 112.46 / NRRL 194 / M139) (Aspergillus nidulans)).